We begin with the raw amino-acid sequence, 982 residues long: Collagen alpha-1(I) chain (982 aa).

Residues 1 to 982 (GPMGPSGPRG…PGAPGPPGPP (982 aa)) are disordered. Over residues 8–27 (PRGFQGPPGEPGEPGASGPM) the composition is skewed to low complexity. Basic and acidic residues predominate over residues 39–53 (NGDDGEAGKPGRPGE). Serine 81 is modified (phosphoserine). 2 stretches are compositionally biased toward low complexity: residues 89 to 105 (DAGP…PGEN) and 128 to 141 (PAGA…TGAA). Residues 143–155 (PPGPTGPAGPPGF) show a composition bias toward pro residues. Residues 189-228 (AGAAGPAGNPGADGQPGAKGANGAPGIAGAPGFPGARGPS) are compositionally biased toward low complexity. Positions 294–303 (GERGGPGSRG) are enriched in gly residues. Composition is skewed to low complexity over residues 304–335 (FPGA…PGEA), 347–373 (KGIT…QDGR), 382–401 (ARGQ…AGEP), 425–437 (AGAQ…AGPA), 513–526 (APGA…PGIQ), 583–597 (SGPS…ARGA), 610–640 (AGFA…AGPA), 666–682 (SAGP…AGRV), and 727–751 (AGEK…QGIA). Phosphoserine is present on serine 586. Pro residues-rich tracts occupy residues 792 to 802 (PPGPIGPPGIA) and 838 to 853 (AGPP…PGPV). Positions 874-888 (IGPTGARGPAGPQGP) are enriched in low complexity. A compositionally biased stretch (basic and acidic residues) spans 889–900 (RGDKGETGEQGD). The segment covering 916–940 (PGEQGPAGASGPAGPRGPPGSAGAP) has biased composition (low complexity). Residues 966–982 (PRGPPGPPGAPGPPGPP) show a composition bias toward pro residues.

It belongs to the fibrillar collagen family. In terms of assembly, trimers of one alpha 2(I) and two alpha 1(I) chains. Prolines at the third position of the tripeptide repeating unit (G-X-Y) are hydroxylated in some or all of the chains. Forms the fibrils of tendon, ligaments and bones. In bones, the fibrils are mineralized with calcium hydroxyapatite.

It is found in the secreted. The protein localises to the extracellular space. The protein resides in the extracellular matrix. In terms of biological role, type I collagen is a member of group I collagen (fibrillar forming collagen). The chain is Collagen alpha-1(I) chain from Toxodon sp.